Here is a 72-residue protein sequence, read N- to C-terminus: Translation initiation factor IF-1 (72 aa).

Residues 1–72 (MAREDLIEVE…SRGRITYRKK (72 aa)) form the S1-like domain.

The protein belongs to the IF-1 family. In terms of assembly, component of the 30S ribosomal translation pre-initiation complex which assembles on the 30S ribosome in the order IF-2 and IF-3, IF-1 and N-formylmethionyl-tRNA(fMet); mRNA recruitment can occur at any time during PIC assembly.

Its subcellular location is the cytoplasm. Functionally, one of the essential components for the initiation of protein synthesis. Stabilizes the binding of IF-2 and IF-3 on the 30S subunit to which N-formylmethionyl-tRNA(fMet) subsequently binds. Helps modulate mRNA selection, yielding the 30S pre-initiation complex (PIC). Upon addition of the 50S ribosomal subunit IF-1, IF-2 and IF-3 are released leaving the mature 70S translation initiation complex. This Acholeplasma laidlawii (strain PG-8A) protein is Translation initiation factor IF-1.